Consider the following 262-residue polypeptide: Capsid protein (262 aa).

Residues 183–262 form a disordered region; it reads APTIEAITRP…SHHRSPSPRK (80 aa). A Bipartite nuclear localization signal motif is present at residues 215 to 233; that stretch reads RRRKVKTTVVYGRRRSKSR. Basic residues-rich tracts occupy residues 215–234 and 252–262; these read RRRKVKTTVVYGRRRSKSRE and SSHHRSPSPRK.

It belongs to the avihepadnavirus core antigen family. In terms of assembly, homodimerizes, then multimerizes.

It localises to the virion. The protein resides in the host cytoplasm. Its function is as follows. Self assembles to form an icosahedral capsid. Most capsid appear to be large particles with an icosahedral symmetry of T=4 and consist of 240 copies of capsid protein, though a fraction forms smaller T=3 particles consisting of 180 capsid proteins. Entering capsid are transported along microtubules to the nucleus. Phosphorylation of the capsid is thought to induce exposure of nuclear localization signal in the C-terminal portion of the capsid protein that allows binding to the nuclear pore complex via the importin (karyopherin-) alpha and beta. Capsids are imported in intact form through the nuclear pore into the nuclear basket, where it probably binds NUP153. Only capsids that contain the mature viral genome can release the viral DNA and capsid protein into the nucleoplasm. Immature capsids get stucked in the basket. Capsids encapsulate the pre-genomic RNA and the P protein. Pre-genomic RNA is reverse transcribed into DNA while the capsid is still in the cytoplasm. The capsid can then either be directed to the nucleus, providing more genome for transcription, or bud through the endoplasmic reticulum to provide new virions. This Duck hepatitis B virus (isolate Shanghai/DHBVQCA34) (DHBV) protein is Capsid protein (C).